We begin with the raw amino-acid sequence, 262 residues long: Phosphonates import ATP-binding protein PhnC (262 aa).

The 249-residue stretch at 5-253 (IRVEKLAKTF…RFDHLYRSIN (249 aa)) folds into the ABC transporter domain. 37–44 (GPSGSGKS) serves as a coordination point for ATP.

This sequence belongs to the ABC transporter superfamily. Phosphonates importer (TC 3.A.1.9.1) family. In terms of assembly, the complex is composed of two ATP-binding proteins (PhnC), two transmembrane proteins (PhnE) and a solute-binding protein (PhnD).

It localises to the cell inner membrane. The enzyme catalyses phosphonate(out) + ATP + H2O = phosphonate(in) + ADP + phosphate + H(+). In terms of biological role, part of the ABC transporter complex PhnCDE involved in phosphonates import. Responsible for energy coupling to the transport system. This chain is Phosphonates import ATP-binding protein PhnC, found in Escherichia coli O6:K15:H31 (strain 536 / UPEC).